The chain runs to 415 residues: Tyrosine--tRNA ligase (415 aa).

The short motif at 54–63 (PTGSNIHLGH) is the 'HIGH' region element. Residues 248 to 252 (KMSKS) carry the 'KMSKS' region motif. Residue Lys251 participates in ATP binding. The S4 RNA-binding domain occupies 351-414 (AKAFYLFSAV…LGKKTFRRLV (64 aa)).

The protein belongs to the class-I aminoacyl-tRNA synthetase family. TyrS type 2 subfamily. Homodimer.

The protein localises to the cytoplasm. The enzyme catalyses tRNA(Tyr) + L-tyrosine + ATP = L-tyrosyl-tRNA(Tyr) + AMP + diphosphate + H(+). In terms of biological role, catalyzes the attachment of tyrosine to tRNA(Tyr) in a two-step reaction: tyrosine is first activated by ATP to form Tyr-AMP and then transferred to the acceptor end of tRNA(Tyr). This is Tyrosine--tRNA ligase from Synechococcus sp. (strain CC9605).